A 253-amino-acid polypeptide reads, in one-letter code: Small ribosomal subunit protein cS22 (253 aa).

A chloroplast-targeting transit peptide spans 1-56 (MATFLTNVVSIKPTIFSFQSESFTPLHTRVNVFSSKPFPSLAGTFSRSSRTRFIPY). RRM domains are found at residues 76–154 (RRVY…ITEK) and 177–253 (YKVY…VNKA).

Belongs to the chloroplast-specific ribosomal protein cS22 family. Component of the chloroplast small ribosomal subunit (SSU). Mature 70S chloroplast ribosomes of higher plants consist of a small (30S) and a large (50S) subunit. The 30S small subunit contains 1 molecule of ribosomal RNA (16S rRNA) and 24 different proteins. The 50S large subunit contains 3 rRNA molecules (23S, 5S and 4.5S rRNA) and 33 different proteins. In terms of tissue distribution, expressed constitutively in roots, stems, flower buds, flowers and leaves.

It localises to the plastid. Its subcellular location is the chloroplast. Its function is as follows. Component of the chloroplast ribosome (chloro-ribosome), a dedicated translation machinery responsible for the synthesis of chloroplast genome-encoded proteins, including proteins of the transcription and translation machinery and components of the photosynthetic apparatus. May have a role in the recruitment of stored chloroplast mRNAs for active protein synthesis. Bind single strand DNA (ssDNA) and RNA in vitro. Exhibits RNA chaperone activity. Negatively regulates resistance responses to abiotic stresses during seed germination (e.g. salt, dehydration, and low temperature) and seedling growth (e.g. salt). This Arabidopsis thaliana (Mouse-ear cress) protein is Small ribosomal subunit protein cS22.